A 1142-amino-acid polypeptide reads, in one-letter code: MDRSDKKVNVEEVNVPSNLQIELEKSGTSSSVSLRSPTKSSATNLAGMAEGARDNASIASSSVDSLNMLLERQRVRQLNHPQHQQHISSSLAKTPTTTSSFCSSGSSKNKVKETNRISLTYDPVSKRKVLNTYEIIKELGHGQHGKVKLARDILSKQLVAIKIVDRHEKKQRKFFTFIKSSKISENDKIKREIAIMKKCHHKHVVQLIEVLDDLKSRKIYLVLEYCSRGEVKWCPPDCMESDAKGPSLLSFQETREILRGVVLGLEYLHYQGIIHRDIKPANLLISGDGTVKISDFGVSLAASSTNSSDSSESLDELELAKTVGTPAFFAPEMCLGEDAFTRYNLTKENLFRGSCISFMIDIWAVGVTLYCLLFGMLPFFSDFELKLFEKIVNDPLKFPTFKEIQSNKVSKVSCEEEYEMAKDLLLKLLEKNPQKRMTIPAIKKHPFVSWDFDHVPENDEKLLSSVLEQKLRFQCNQTDQFEPISISKHELKNAVSGVGKKIKESVLKSIPLKDPSDLSNKNYLHPTETTRGRGDANVIVSEGSVLSNIKELSANDGCLNTDSDTNININDDDHYSGDDNDGHLTKRELERELNKFDDKHEAGNMVNLPINSSFASLDSFYIDNFAMARMGMSSPEAGDSVSSVPNLPSAPSSTRLGRSPVFSGVTNQPSPIRPVLPQQKSSFCATGRYDKSHNSLLRNSSSHLTSYNSGRPSSRTGRMNSRNQNLPKIPNSLSKISTTKLTELRVPKDSEIPSPAKNPNADRLRRFPVKKNTKTPAIKDPPRININSSDKSGSKNSPIKSLYQRMKQSKDNSKTFEVRRGNFFSHFNGDDDDSSSQSSVTSSGSESDSELSSTSSSCTSGTQSRNSSNNNAYSETESLPFEFGVDSEDGSGVLLRDLPNEDQIRPFLDIQPCRRMKVKSSLNLEPPSVSSSSSSSSDEDELILNVGTAGHRRRHNSSKLSELSNSPQKGSNNFMYSNGSVHDSETTITPQNMDDLTLHQALSRSQPISKPGPLVLPKRLDQKKATTETSNLTDIVEFNGNNDHRKDKNFDKVLYSRDLLKDALSSTNAGRRRSIPSNKIRGRKDASITMSTNVGNDEHARNTSCHGDKGQENGAIKQRTHERSRSLTVAELNEEKRRSALP.

Residues 22–41 (ELEKSGTSSSVSLRSPTKSS) form a disordered region. At Thr-43 the chain carries Phosphothreonine. Residues 82–93 (QHQQHISSSLAK) are compositionally biased toward polar residues. The interval 82–107 (QHQQHISSSLAKTPTTTSSFCSSGSS) is disordered. Residues 94-107 (TPTTTSSFCSSGSS) show a composition bias toward low complexity. The Protein kinase domain occupies 133–448 (YEIIKELGHG…IPAIKKHPFV (316 aa)). ATP is bound by residues 139 to 147 (LGHGQHGKV) and Lys-162. Asp-277 serves as the catalytic Proton acceptor. Disordered stretches follow at residues 634-678 (SPEA…VLPQ), 694-799 (NSLL…NSPI), 825-875 (SHFN…AYSE), 919-971 (KSSL…QKGS), 1005-1027 (SQPISKPGPLVLPKRLDQKKATT), and 1066-1142 (STNA…SALP). The segment covering 640–656 (SVSSVPNLPSAPSSTRL) has biased composition (polar residues). The segment covering 694-706 (NSLLRNSSSHLTS) has biased composition (low complexity). Polar residues predominate over residues 707 to 741 (YNSGRPSSRTGRMNSRNQNLPKIPNSLSKISTTKL). The segment covering 742–751 (TELRVPKDSE) has biased composition (basic and acidic residues). Polar residues predominate over residues 785–799 (NINSSDKSGSKNSPI). 2 stretches are compositionally biased toward low complexity: residues 835 to 868 (SSQSSVTSSGSESDSELSSTSSSCTSGTQSRNSS) and 920 to 936 (SSLNLEPPSVSSSSSSS). Positions 958-971 (SKLSELSNSPQKGS) are enriched in polar residues. Residue Ser-964 is modified to Phosphoserine. Residues 1096–1111 (NDEHARNTSCHGDKGQ) are compositionally biased toward basic and acidic residues. At Ser-1126 the chain carries Phosphoserine. A compositionally biased stretch (basic and acidic residues) spans 1133 to 1142 (NEEKRRSALP).

This sequence belongs to the protein kinase superfamily. Ser/Thr protein kinase family. Associates with the SNF1 kinase complex. Interacts with SNF1 and REG1. Autophosphorylated.

The protein resides in the cytoplasm. The enzyme catalyses L-seryl-[protein] + ATP = O-phospho-L-seryl-[protein] + ADP + H(+). It catalyses the reaction L-threonyl-[protein] + ATP = O-phospho-L-threonyl-[protein] + ADP + H(+). Functionally, serine/threonine-protein kinase that phosphorylates SNF1, the catalytic subunit of the SNF1 kinase complex. Acts as an activator of the SNF1 kinase complex and controls its nuclear localization upon glucose and nitrogen depletion. Also required for SNF1 kinase activation under other stress conditions like alkaline pH or presence of cadmium. This is SNF1-activating kinase 1 (SAK1) from Saccharomyces cerevisiae (strain ATCC 204508 / S288c) (Baker's yeast).